Reading from the N-terminus, the 968-residue chain is MPFTLGQRWISDTESELGLGTVVAIDVRMITLLFPATGENRLYARNDSPITRVMFNPSDTITHHEGWQLKVEEVTQENGLITYIGTRLDTEETGVAMREVLLDSKLTFSKPQDRLFAGQIDRMDRFALRFRARKYQSEQFRLPWSGLRGIRASLIPHQLHIAYEVGQRHAPRVLLADEVGLGKTIEAGMIIHQQLLAGRAERVLIVVPESLQHQWLVEMLRRFNLRFSLFDDSRYSEALLDSSNPFDTEQMVICSLDFVRRNKQRLEQLADASWDLLVVDEAHHLAWSEEAPSREYQVIEQLAEHIPGVLLLTATPEQLGQQSHFARLRLLDPDRFHDYEEFVNEQQKYRPIADAVTLLLGGERLTDDKLNLLGELIDEQDIEPLLKAANSQSEDSEAARQELVTMLMDRHGTSRVLFRNTRNGVKGFPHRVLHQIKLPLPTQYQTAIKVSGIMGAKKTLDARAKDMLYPEQIYQEFEGENATWWNFDPRVEWLLNYLVANRGEKVLVICAQAATALQLEQVLREREAIRAAVFHEGLSLIERDRAAAYFASEEDGAQVLLCSEIGSEGRNFQFACQLVMFDLPFNPDLLEQRIGRLDRIGQNREIQIMVPYLEDTAQAILVRWYHEGLDAFEHTCPTGRTIYDSSYQELISYLATPSEQEGLDEFIHTCRQQHEGLKLQLEQGRDRLLEMHSNGGEHGQELAQSIAEQDNDINLVSFALNLFDIVGINQEDRSDNLIVLTPSDHMLVPDFPGLPPDGCTVTFDREQALSREDAQFVSWEHPIIRNGLDLILSGDTGSCAVSLLKNKALPVGTLLAELVYVVEAQAPKHLQLTRFLPPTPVRMLMDRNGTNLAAQVEFESFNRQLNAVNRHTSSKLVNAVQQEVHTMLQQAEALVEAQAQALIETAKREADDKLSTELARLEALKAVNPNIRDDEIEALEHNRKMVLENLNQAGWRLDAIRLVVVTHQ.

Residues 164–334 form the Helicase ATP-binding domain; it reads EVGQRHAPRV…FARLRLLDPD (171 aa). Position 177 to 184 (177 to 184) interacts with ATP; sequence DEVGLGKT. The short motif at 280 to 283 is the DEAH box element; the sequence is DEAH. The Helicase C-terminal domain maps to 490–644; it reads RVEWLLNYLV…TCPTGRTIYD (155 aa).

It belongs to the SNF2/RAD54 helicase family. RapA subfamily. As to quaternary structure, interacts with the RNAP. Has a higher affinity for the core RNAP than for the holoenzyme. Its ATPase activity is stimulated by binding to RNAP.

Transcription regulator that activates transcription by stimulating RNA polymerase (RNAP) recycling in case of stress conditions such as supercoiled DNA or high salt concentrations. Probably acts by releasing the RNAP, when it is trapped or immobilized on tightly supercoiled DNA. Does not activate transcription on linear DNA. Probably not involved in DNA repair. The chain is RNA polymerase-associated protein RapA from Yersinia pseudotuberculosis serotype O:1b (strain IP 31758).